The following is a 111-amino-acid chain: Translation initiation factor 1A (111 aa).

Basic residues predominate over residues 1 to 13 (MKKSNNKNNHKNN). Residues 1–30 (MKKSNNKNNHKNNHNNNQGGENIRVRSPRR) are disordered. The S1-like domain occupies 23-96 (IRVRSPRRGE…EKADVIWRYT (74 aa)).

This sequence belongs to the eIF-1A family.

Functionally, seems to be required for maximal rate of protein biosynthesis. Enhances ribosome dissociation into subunits and stabilizes the binding of the initiator Met-tRNA(I) to 40 S ribosomal subunits. In Methanosphaera stadtmanae (strain ATCC 43021 / DSM 3091 / JCM 11832 / MCB-3), this protein is Translation initiation factor 1A.